Here is a 414-residue protein sequence, read N- to C-terminus: 5-aminolevulinate synthase (414 aa).

Residues Arg-22, Ser-133, and Lys-152 each coordinate substrate. 3 residues coordinate pyridoxal 5'-phosphate: Ser-185, His-213, and Thr-241. Lys-244 is an active-site residue. Lys-244 is modified (N6-(pyridoxal phosphate)lysine). Residues Thr-273 and Thr-274 each coordinate pyridoxal 5'-phosphate. A substrate-binding site is contributed by Thr-359.

This sequence belongs to the class-II pyridoxal-phosphate-dependent aminotransferase family. In terms of assembly, homodimer. It depends on pyridoxal 5'-phosphate as a cofactor.

It catalyses the reaction succinyl-CoA + glycine + H(+) = 5-aminolevulinate + CO2 + CoA. It functions in the pathway porphyrin-containing compound metabolism; protoporphyrin-IX biosynthesis; 5-aminolevulinate from glycine: step 1/1. The sequence is that of 5-aminolevulinate synthase (hemA) from Rickettsia prowazekii (strain Madrid E).